The chain runs to 499 residues: Leukocyte immunoglobulin-like receptor subfamily A member 4 (499 aa).

Residues methionine 1–alanine 23 form the signal peptide. 4 consecutive Ig-like C2-type domains span residues glutamate 24–threonine 118, proline 123–leucine 213, proline 224–aspartate 313, and proline 324–leucine 413. Residues glutamate 24–asparagine 446 are Extracellular-facing. Cysteine 49 and cysteine 98 are disulfide-bonded. N-linked (GlcNAc...) asparagine glycosylation occurs at asparagine 138. Cysteine 143 and cysteine 195 are oxidised to a cystine. N-linked (GlcNAc...) asparagine glycans are attached at residues asparagine 239, asparagine 279, and asparagine 300. An intrachain disulfide couples cysteine 244 to cysteine 295. A disulfide bond links cysteine 344 and cysteine 395. Position 404 is a 3'-nitrotyrosine (tyrosine 404). A helical membrane pass occupies residues leucine 447–alanine 467. Over glutamine 468–isoleucine 499 the chain is Cytoplasmic.

Interacts with FCER1G; this stabilizes the expression of both proteins at the cell membrane. Interacts with BST2; leads to activation of LILRA4-mediated signaling and down-regulation of the innate immune response to viral pathogens. Detected on plasmacytoid dendritic cells (at protein level). Detected on plasmacytoid dendritic cells, but not on monocytes or B cells.

The protein localises to the cell membrane. Functions coreceptor to limit the innate immune responses to viral infections; signaling occurs via FCER1G. Down-regulates the production of IFNA1, IFNA2, IFNA4, IFNB1 and TNF by plasmacytoid dendritic cells that have been exposed to influenza virus or cytidine-phosphate-guanosine (CpG) dinucleotides, indicating it functions as a negative regulator of TLR7 and TLR9 signaling cascades. Down-regulates interferon production in response to interaction with BST2 on HIV-1 infected cells. Activates a signaling cascade in complex with FCER1G that results in phosphorylation of Src family and Syk kinases and thereby triggers mobilization of intracellular Ca(2+). Does not interfere with the differentiation of plasmacytoid dendritic cells into antigen-presenting cells. The polypeptide is Leukocyte immunoglobulin-like receptor subfamily A member 4 (Homo sapiens (Human)).